A 342-amino-acid chain; its full sequence is Aquaporin-7 (342 aa).

The Cytoplasmic segment spans residues 1-36 (MVQTSRHRRSTRGSKMVSWSVMAKIQEILQKKMVRE). Ser20 carries the post-translational modification Phosphoserine. The helical transmembrane segment at 37–54 (FLAEFMSTYVMMVFGLGS) threads the bilayer. The Extracellular portion of the chain corresponds to 55-67 (VAHMVLNKKYGSY). The helical transmembrane segment at 68-85 (LGVNLGFGFGVTMGVHVA) threads the bilayer. Topologically, residues 86–89 (GHIS) are cytoplasmic. Positions 90–103 (GAHMNAAVTFANCA) form an intramembrane region, discontinuously helical. The short motif at 94 to 96 (NAA) is the NPA 1 element. At 104–111 (LGRVPWRK) the chain is on the cytoplasmic side. A helical membrane pass occupies residues 112–132 (FPVYVLGQFLGSFLAAATIYT). Over 133–167 (LFYTAILHFSGGQLMVTGPVATAGIFATYLPDHMT) the chain is Extracellular. Residues 168–188 (LWRGFLNEAWLTGMLQLCLFA) form a helical membrane-spanning segment. Residues 189–200 (ITDQENNAALPG) are Cytoplasmic-facing. Residues 201–217 (TQALVIGILVVIIGVSL) form a helical membrane-spanning segment. Topologically, residues 218–221 (GMNT) are extracellular. Positions 222 to 235 (GYAINPSRDLPPRV) form an intramembrane region, discontinuously helical. The NPA 2 signature appears at 226–228 (NPS). Topologically, residues 236 to 253 (FTFIAGWGKEVFSEGENW) are extracellular. Residues 254–275 (WWVPVVAPLLGACLGGIIYLVF) traverse the membrane as a helical segment. The Cytoplasmic segment spans residues 276-342 (IGSTTPREPL…LHESMALGHF (67 aa)).

Belongs to the MIP/aquaporin (TC 1.A.8) family. In terms of assembly, homotetramer; each monomer provides an independent glycerol/water pore. Two homotetramers on opposing membranes can dimerize, forming a cell-cell junction. Interacts with PLIN1. In terms of processing, phosphorylation by PKA could prevent the interaction with PLIN1.

The protein resides in the cell membrane. It localises to the cytoplasmic vesicle membrane. The protein localises to the lipid droplet. It carries out the reaction glycerol(in) = glycerol(out). The enzyme catalyses H2O(in) = H2O(out). The catalysed reaction is urea(in) = urea(out). Glycerol transport is regulated by pH, with the porin being permeable to glycerol at pH 7.4 but not at pH 5.5. Water permeability, however, is not influenced by pH. Aquaglyceroporins form homotetrameric transmembrane channels, with each monomer independently mediating glycerol and water transport across the plasma membrane along their osmotic gradient. Could also be permeable to urea. Mediates the efflux of glycerol, formed upon triglyceride hydrolysis, to avoid its accumulation in adipocytes and to make it available to other tissues. In the kidney, mediates the reabsorption of glycerol, preventing its loss in urine, again participating to energy homeostasis. In pancreatic beta cells, it also mediates the efflux of glycerol, regulating its intracellular levels. This is Aquaporin-7 (AQP7) from Macaca fascicularis (Crab-eating macaque).